A 363-amino-acid chain; its full sequence is MTVSYGAPGRVNLIGEHTDYNLGFALPIALPRRTVVTFTPEHTGAITARSDRADGSARIPLDTTPGQVTGWAAYAAGAIWALRGAGHPVPGGAMSITSDVEIGSGLSSSAALIGAVLGAVGAATGTRIDRLERARLAQRAENDYVGAPTGLLDHLAALFGAPKTALLIDFRDITVRPVAFDPDACDVVLLLMDSRARHRHAGGEYALRRASCERAAADLGVSSLRAVQDRGLAALGAIADPIDARRARHVLTENQRVLDFAAALADSDFTAAGQLLTASHESMREDFAITTERIDLIAESAVRAGALGARMTGGGFGGAVIALVPADRARDVADTVRRAAVTAGYDEPAVSRTYAAPGAAECC.

16–19 contributes to the substrate binding site; the sequence is EHTD. Residues S50 and 103–109 contribute to the ATP site; that span reads GSGLSSS. Residues S109 and E141 each coordinate Mg(2+). The active-site Proton acceptor is D153. Y205 contributes to the substrate binding site.

This sequence belongs to the GHMP kinase family. GalK subfamily.

The protein resides in the cytoplasm. It carries out the reaction alpha-D-galactose + ATP = alpha-D-galactose 1-phosphate + ADP + H(+). The protein operates within carbohydrate metabolism; galactose metabolism. Functionally, catalyzes the transfer of the gamma-phosphate of ATP to D-galactose to form alpha-D-galactose-1-phosphate (Gal-1-P). The polypeptide is Galactokinase (Mycobacterium bovis (strain ATCC BAA-935 / AF2122/97)).